We begin with the raw amino-acid sequence, 254 residues long: Peptide methionine sulfoxide reductase A5 (254 aa).

The N-terminal stretch at 1–26 is a signal peptide; that stretch reads MARGSAAAAIAGVVWVLLLLVGVASG.

This sequence belongs to the MsrA Met sulfoxide reductase family.

The catalysed reaction is L-methionyl-[protein] + [thioredoxin]-disulfide + H2O = L-methionyl-(S)-S-oxide-[protein] + [thioredoxin]-dithiol. It catalyses the reaction [thioredoxin]-disulfide + L-methionine + H2O = L-methionine (S)-S-oxide + [thioredoxin]-dithiol. Catalyzes the reduction of methionine sulfoxide (MetSO) to methionine in proteins. Plays a protective role against oxidative stress by restoring activity to proteins that have been inactivated by methionine oxidation. MSRA family specifically reduces the MetSO S-enantiomer. In Oryza sativa subsp. japonica (Rice), this protein is Peptide methionine sulfoxide reductase A5 (MSRA5).